We begin with the raw amino-acid sequence, 186 residues long: ATP synthase subunit delta (186 aa).

This sequence belongs to the ATPase delta chain family. As to quaternary structure, F-type ATPases have 2 components, F(1) - the catalytic core - and F(0) - the membrane proton channel. F(1) has five subunits: alpha(3), beta(3), gamma(1), delta(1), epsilon(1). F(0) has three main subunits: a(1), b(2) and c(10-14). The alpha and beta chains form an alternating ring which encloses part of the gamma chain. F(1) is attached to F(0) by a central stalk formed by the gamma and epsilon chains, while a peripheral stalk is formed by the delta and b chains.

It is found in the cell inner membrane. Its function is as follows. F(1)F(0) ATP synthase produces ATP from ADP in the presence of a proton or sodium gradient. F-type ATPases consist of two structural domains, F(1) containing the extramembraneous catalytic core and F(0) containing the membrane proton channel, linked together by a central stalk and a peripheral stalk. During catalysis, ATP synthesis in the catalytic domain of F(1) is coupled via a rotary mechanism of the central stalk subunits to proton translocation. In terms of biological role, this protein is part of the stalk that links CF(0) to CF(1). It either transmits conformational changes from CF(0) to CF(1) or is implicated in proton conduction. This Nitrobacter winogradskyi (strain ATCC 25391 / DSM 10237 / CIP 104748 / NCIMB 11846 / Nb-255) protein is ATP synthase subunit delta.